Consider the following 106-residue polypeptide: HIG1 domain family member 2B (106 aa).

The Cytoplasmic portion of the chain corresponds to 1-46 (MATLGFVTPEAPFESSKPPIFEGLSPTVYSNPEGFKEKFLRKTREN). An HIG1 domain is found at 20–106 (IFEGLSPTVY…LAATAMKSPP (87 aa)). The chain crosses the membrane as a helical span at residues 47–67 (PVVPIGFLCTAAVLTNGLYCF). Residues 68-81 (HQGNSQCSRLMMHT) lie on the Extracellular side of the membrane. Residues 82–102 (QIAAQGFTIAAILLGLAATAM) form a helical membrane-spanning segment. Topologically, residues 103-106 (KSPP) are cytoplasmic.

It localises to the membrane. The polypeptide is HIG1 domain family member 2B (HIGD2B) (Homo sapiens (Human)).